The chain runs to 146 residues: Large ribosomal subunit protein uL14 (146 aa).

It belongs to the universal ribosomal protein uL14 family.

In Encephalitozoon cuniculi (strain GB-M1) (Microsporidian parasite), this protein is Large ribosomal subunit protein uL14 (RPL23).